The following is a 218-amino-acid chain: Ribose-5-phosphate isomerase A (218 aa).

Residues 28 to 31 (TGST), 81 to 84 (DGAD), and 94 to 97 (KGGG) each bind substrate. Catalysis depends on Glu-103, which acts as the Proton acceptor. Residue Lys-121 coordinates substrate.

This sequence belongs to the ribose 5-phosphate isomerase family. In terms of assembly, homodimer.

The catalysed reaction is aldehydo-D-ribose 5-phosphate = D-ribulose 5-phosphate. Its pathway is carbohydrate degradation; pentose phosphate pathway; D-ribose 5-phosphate from D-ribulose 5-phosphate (non-oxidative stage): step 1/1. In terms of biological role, catalyzes the reversible conversion of ribose-5-phosphate to ribulose 5-phosphate. The polypeptide is Ribose-5-phosphate isomerase A (Shewanella woodyi (strain ATCC 51908 / MS32)).